The primary structure comprises 321 residues: Leucine-rich repeat-containing protein 46 (321 aa).

LRR repeat units lie at residues 45–66 (ELQT…EGLK), 67–88 (NLHS…ACVP), 89–110 (SLRF…LDLP), and 111–132 (CLQF…EFPQ). Positions 142 to 184 (NSCTNQDSYRELVIEALPLLLDLDGQPVMERWISDEEDEASSE) constitute an LRRCT domain. Phosphoserine is present on residues Ser-175 and Ser-182. The stretch at 198-222 (RGFLKELEQELSRHREHRQQAALTQ) forms a coiled coil. The disordered stretch occupies residues 235–321 (NLPLLPGVPM…TKTMAKRSKK (87 aa)).

It localises to the cell projection. It is found in the cilium. The protein localises to the flagellum. In terms of biological role, required for normal spermatogenesis and male fertility. Plays an important role in sperm flagellum biogenesis. The polypeptide is Leucine-rich repeat-containing protein 46 (LRRC46) (Macaca fascicularis (Crab-eating macaque)).